A 105-amino-acid chain; its full sequence is uncharacterized protein (105 aa).

Residues 2–42 (QVLIGTKLVTEGIDIKQLMMVIMLDNRLNIIELIQGVGRLR) form the Helicase C-terminal domain.

This sequence belongs to the helicase family. Yeast subtelomeric Y' repeat subfamily.

This is an uncharacterized protein from Saccharomyces cerevisiae (strain ATCC 204508 / S288c) (Baker's yeast).